The following is a 289-amino-acid chain: N-acetylmuramoyl-L-alanine amidase AmiA (289 aa).

Residues Met-1 to Ala-34 constitute a signal peptide (tat-type signal). Residues Leu-39–Pro-63 form a disordered region. The span at Ser-46 to Gly-55 shows a compositional bias: basic residues. One can recognise a MurNAc-LAA domain in the interval Val-59–Ile-273.

This sequence belongs to the N-acetylmuramoyl-L-alanine amidase 3 family. Exported by the Tat system. The position of the signal peptide cleavage has not been experimentally proven. Can also be exported by the Sec system.

Its subcellular location is the periplasm. It carries out the reaction Hydrolyzes the link between N-acetylmuramoyl residues and L-amino acid residues in certain cell-wall glycopeptides.. Its function is as follows. Cell-wall hydrolase involved in septum cleavage during cell division. Can also act as powerful autolysin in the presence of murein synthesis inhibitors. This Escherichia coli (strain K12) protein is N-acetylmuramoyl-L-alanine amidase AmiA (amiA).